The primary structure comprises 103 residues: Histone H4 (103 aa).

Residues 1 to 14 show a composition bias toward gly residues; that stretch reads MSGRGKGGKGLGKG. Positions 1 to 20 are disordered; that stretch reads MSGRGKGGKGLGKGGAKRHR. Lysine 6 is subject to N6-acetyl-N6-methyllysine; alternate. Residues lysine 6, lysine 9, and lysine 13 each carry the N6-methyllysine; alternate modification. At lysine 13 the chain carries N6-acetyl-N6-methyllysine; alternate. Residues 17–21 mediate DNA binding; it reads KRHRK. An N6-glutaryllysine modification is found at lysine 92.

The protein belongs to the histone H4 family. The nucleosome is a histone octamer containing two molecules each of H2A, H2B, H3 and H4 assembled in one H3-H4 heterotetramer and two H2A-H2B heterodimers. The octamer wraps approximately 147 bp of DNA. Glutarylation at Lys-92 (H4K91glu) destabilizes nucleosomes by promoting dissociation of the H2A-H2B dimers from nucleosomes.

The protein resides in the nucleus. It is found in the chromosome. Core component of nucleosome. Nucleosomes wrap and compact DNA into chromatin, limiting DNA accessibility to the cellular machineries which require DNA as a template. Histones thereby play a central role in transcription regulation, DNA repair, DNA replication and chromosomal stability. DNA accessibility is regulated via a complex set of post-translational modifications of histones, also called histone code, and nucleosome remodeling. In Mycosarcoma maydis (Corn smut fungus), this protein is Histone H4 (HHF1).